A 437-amino-acid polypeptide reads, in one-letter code: Epsilon-sarcoglycan (437 aa).

Over 1–317 the chain is Extracellular; the sequence is MQLPRWWELG…LKSRDYYTDF (317 aa). A glycan (N-linked (GlcNAc...) asparagine) is linked at asparagine 200. A helical membrane pass occupies residues 318-338; it reads LITLAVPSAVALVLFLILAYI. Over 339-437 the chain is Cytoplasmic; the sequence is MCCRREGVEK…QQQTTGKWYP (99 aa).

The protein belongs to the sarcoglycan alpha/epsilon family. N-glycosylated. Post-translationally, ubiquitinated, leading to its degradation by the proteasome.

Its subcellular location is the cell membrane. The protein resides in the sarcolemma. The protein localises to the cytoplasm. It is found in the cytoskeleton. It localises to the cell projection. Its subcellular location is the dendrite. The protein resides in the golgi apparatus. Component of the sarcoglycan complex, a subcomplex of the dystrophin-glycoprotein complex which forms a link between the F-actin cytoskeleton and the extracellular matrix. The polypeptide is Epsilon-sarcoglycan (Macaca fascicularis (Crab-eating macaque)).